Reading from the N-terminus, the 186-residue chain is Testis-expressed protein 36 (186 aa).

A disordered region spans residues 1–52 (MTKGRRFNPPSDKDGRWFPHIGLTQKTPESITSATSKEPQSPHLPRQAEGKL). Over residues 24–39 (TQKTPESITSATSKEP) the composition is skewed to polar residues.

This is Testis-expressed protein 36 (TEX36) from Homo sapiens (Human).